The sequence spans 779 residues: Potassium/sodium hyperpolarization-activated cyclic nucleotide-gated channel 3 (779 aa).

Residues 1 to 47 form a disordered region; the sequence is MEEEARPAAGAGEAATPARETPPAAPAQARAASGGVPESAPEPKRRQ. Topologically, residues 1–96 are cytoplasmic; that stretch reads MEEEARPAAG…PYSDFRFYWD (96 aa). Residues 7–32 show a composition bias toward low complexity; sequence PAAGAGEAATPARETPPAAPAQARAA. Residues 45 to 90 form an involved in subunit assembly region; it reads RRQLGTLLQPTVNKFSLRVFGSHKAVEIEQERVKSAGAWIIHPYSD. The chain crosses the membrane as a helical span at residues 97–117; it reads LIMLLLMVGNLIVLPVGITFF. Over 118-123 the chain is Extracellular; that stretch reads KEENSP. The helical transmembrane segment at 124–144 threads the bilayer; sequence PWIVFNVLSDTFFLLDLVLNF. The Cytoplasmic portion of the chain corresponds to 145-170; sequence RTGIVVEEGAEILLAPRAIRTRYLRT. Residues 171-191 form a helical membrane-spanning segment; the sequence is WFLVDLISSIPVDYIFLVVEL. The Extracellular portion of the chain corresponds to 192 to 200; it reads EPRLDAEVY. Residues 201–221 form a helical; Voltage-sensor membrane-spanning segment; sequence KTARALRIVRFTKILSLLRLL. At 222–252 the chain is on the cytoplasmic side; it reads RLSRLIRYIHQWEEIFHMTYDLASAVVRIFN. A helical membrane pass occupies residues 253–273; the sequence is LIGMMLLLCHWDGCLQFLVPM. Topologically, residues 274-296 are extracellular; the sequence is LQDFPSDCWVSMNRMVNHSWGRQ. An N-linked (GlcNAc...) asparagine glycan is attached at Asn-290. An intramembrane region (pore-forming) is located at residues 297-318; sequence YSHALFKAMSHMLCIGYGQQAP. Residues 319–328 are Extracellular-facing; that stretch reads VGMPDVWLTM. A helical transmembrane segment spans residues 329 to 349; it reads LSMIVGATCYAMFIGHATALI. Residues 350-779 are Cytoplasmic-facing; the sequence is QSLDSSRRQY…PRGPQISANM (430 aa). The interaction with KCTD3 stretch occupies residues 353 to 779; sequence DSSRRQYQEK…PRGPQISANM (427 aa). 3',5'-cyclic AMP-binding residues include Gly-491, Glu-492, Cys-494, Arg-501, Thr-502, Arg-542, and Arg-545. The interval 549–569 is disordered; it reads KNSILQRKRSEPSPGSSGGVM. Residue Ser-633 is modified to Phosphoserine. The span at 687–697 shows a compositional bias: polar residues; sequence SLSRTGRSQVS. The segment at 687-779 is disordered; sequence SLSRTGRSQV…PRGPQISANM (93 aa).

Belongs to the potassium channel HCN family. In terms of assembly, homotetramer. The potassium channel is composed of a homo- or heterotetrameric complex of pore-forming subunits. Interacts with HCN1. Interacts with KCTD3; this interaction increases cell surface expression and current density of this channel. Interacts with PEX5L. Detected in hypothalamus, amygdala, olfactory bulb, hippocampus and retina (at protein level). Highly expressed in brain and heart, in particular in ventricle, atrium and in sinoatrial node (SAN). Detected at low levels in skeletal muscle and lung. Expressed in DRG neurons.

The protein resides in the cell membrane. It catalyses the reaction K(+)(in) = K(+)(out). It carries out the reaction Na(+)(in) = Na(+)(out). With respect to regulation, unlike HCN2 and HCN4, HCN3 is insensitive to cyclic nucleotides, such as cAMP or cGMP. This lack of sensitivity of HCN3, despite harboring a functional cyclic nucleotide-binding domain (CNBD), may be explained by its shorter C-terminal sequence, which may alter the normal autoinhibition of the channel. Inhibited by Cs(1+) and ivabradine. Phosphatidylinositol-4,5-bisphosphate (PIP(2)) shifts HCN3 activation to more depolarized potentials and accelerated activation kinetics. In terms of biological role, hyperpolarization-activated ion channel that are permeable to sodium and potassium ions, with an about 3:1 preference for potassium ions. Contributes to the native pacemaker currents in heart (If) and in neurons (Ih). In particular, plays a pivotal role in maintaining excitability and promoting rhythmic burst firing within hypothalamic nuclei. Exerts a significant influence on the configuration of the cardiac action potential waveform. Does not appear to play a prominent role in the processing of acute, neuropathic, or inflammatory pain. In Mus musculus (Mouse), this protein is Potassium/sodium hyperpolarization-activated cyclic nucleotide-gated channel 3 (Hcn3).